Here is a 396-residue protein sequence, read N- to C-terminus: S-adenosylmethionine synthase (396 aa).

His-16 contacts ATP. Residue Asp-18 coordinates Mg(2+). K(+) is bound at residue Glu-44. Residues Glu-57 and Gln-100 each contribute to the L-methionine site. The flexible loop stretch occupies residues 100–110 (QSVDIAQGVDR). ATP is bound by residues 165–167 (DAK), Asp-240, 246–247 (RK), Ala-263, and Lys-267. An L-methionine-binding site is contributed by Asp-240. Lys-271 is a binding site for L-methionine.

Belongs to the AdoMet synthase family. As to quaternary structure, homotetramer; dimer of dimers. Mg(2+) serves as cofactor. The cofactor is K(+).

It localises to the cytoplasm. The enzyme catalyses L-methionine + ATP + H2O = S-adenosyl-L-methionine + phosphate + diphosphate. It functions in the pathway amino-acid biosynthesis; S-adenosyl-L-methionine biosynthesis; S-adenosyl-L-methionine from L-methionine: step 1/1. Functionally, catalyzes the formation of S-adenosylmethionine (AdoMet) from methionine and ATP. The overall synthetic reaction is composed of two sequential steps, AdoMet formation and the subsequent tripolyphosphate hydrolysis which occurs prior to release of AdoMet from the enzyme. The sequence is that of S-adenosylmethionine synthase from Pseudomonas syringae pv. syringae (strain B728a).